A 240-amino-acid polypeptide reads, in one-letter code: MKINVLTLFPDMFTPLQVSMLGRGLEDKKWELNLVNFRDFTSDVHHHVDDTPYGGGAGMVLQIMPIKKALDSLTNKGKVIITAPQGKTFNEKMAQDWSKEENLTFICGHYEGFDQRIYDLADETVSIGDYVLTGGELPTMSMIDATVRLLPGILGNSASPVEESFSHGLLEYPQYTRPADFEGQKVPEVLTSGNHQKIAEWRHKEALRATYLYRPDMLADRELTDEEKRMLEEIKSEKEN.

S-adenosyl-L-methionine contacts are provided by residues G108 and 127–132; that span reads IGDYVL.

The protein belongs to the RNA methyltransferase TrmD family. In terms of assembly, homodimer.

The protein resides in the cytoplasm. The catalysed reaction is guanosine(37) in tRNA + S-adenosyl-L-methionine = N(1)-methylguanosine(37) in tRNA + S-adenosyl-L-homocysteine + H(+). Functionally, specifically methylates guanosine-37 in various tRNAs. This Lactobacillus johnsonii (strain CNCM I-12250 / La1 / NCC 533) protein is tRNA (guanine-N(1)-)-methyltransferase.